The following is a 446-amino-acid chain: Probable glycine dehydrogenase (decarboxylating) subunit 1 (446 aa).

It belongs to the GcvP family. N-terminal subunit subfamily. In terms of assembly, the glycine cleavage system is composed of four proteins: P, T, L and H. In this organism, the P 'protein' is a heterodimer of two subunits.

The enzyme catalyses N(6)-[(R)-lipoyl]-L-lysyl-[glycine-cleavage complex H protein] + glycine + H(+) = N(6)-[(R)-S(8)-aminomethyldihydrolipoyl]-L-lysyl-[glycine-cleavage complex H protein] + CO2. Its function is as follows. The glycine cleavage system catalyzes the degradation of glycine. The P protein binds the alpha-amino group of glycine through its pyridoxal phosphate cofactor; CO(2) is released and the remaining methylamine moiety is then transferred to the lipoamide cofactor of the H protein. The chain is Probable glycine dehydrogenase (decarboxylating) subunit 1 from Coxiella burnetii (strain CbuK_Q154) (Coxiella burnetii (strain Q154)).